Reading from the N-terminus, the 1824-residue chain is MSAGGRDEERRKLADIIHHWNANRLDLFEISQPTEDLEFHGVMRFYFQDKAAGNFATKCIRVSSTATTQDVIETLAEKFRPDMRMLSSPKYSLYEVHVSGERRLDIDEKPLVVQLNWNKDDREGRFVLKNENDAIPPKKAQSNGPEKQEKEGVIQNFKRTLSKKEKKEKKKREKEALRQASDKDDRPFQGEDVENSRLAAEVYKDMPETSFTRTISNPEVVMKRRRQQKLEKRMQEFRSSDGRPDSGGTLRIYADSLKPNIPYKTILLSTTDPADFAVAEALEKYGLEKENPKDYCIARVMLPPGAQHSDEKGAKEIILDDDECPLQIFREWPSDKGILVFQLKRRPPDHIPKKTKKHLEGKTPKGKERADGSGYGSTLPPEKLPYLVELSPGRRNHFAYYNYHTYEDGSDSRDKPKLYRLQLSVTEVGTEKLDDNSIQLFGPGIQPHHCDLTNMDGVVTVTPRSMDAETYVEGQRISETTMLQSGMKVQFGASHVFKFVDPSQDHALAKRSVDGGLMVKGPRHKPGIVQETTFDLGGDIHSGTALPTSKSTTRLDSDRVSSASSTAERGMVKPMIRVEQQPDYRRQESRTQDASGPELILPASIEFRESSEDSFLSAIINYTNSSTVHFKLSPTYVLYMACRYVLSNQYRPDISPTERTHKVIAVVNKMVSMMEGVIQKQKNIAGALAFWMANASELLNFIKQDRDLSRITLDAQDVLAHLVQMAFKYLVHCLQSELNNYMPAFLDDPEENSLQRPKIDDVLHTLTGAMSLLRRCRVNAALTIQLFSQLFHFINMWLFNRLVTDPDSGLCSHYWGAIIRQQLGHIEAWAEKQGLELAADCHLSRIVQATTLLTMDKYAPDDIPNINSTCFKLNSLQLQALLQNYHCAPDEPFIPTDLIENVVTVAENTADELARSDGREVQLEEDPDLQLPFLLPEDGYSCDVVRNIPNGLQEFLDPLCQRGFCRLIPHTRSPGTWTIYFEGADYESHLLRENTELAQPLRKEPEIITVTLKKQNGMGLSIVAAKGAGQDKLGIYVKSVVKGGAADVDGRLAAGDQLLSVDGRSLVGLSQERAAELMTRTSSVVTLEVAKQGAIYHGLATLLNQPSPMMQRISDRRGSGKPRPKSEGFELYNNSTQNGSPESPQLPWAEYSEPKKLPGDDRLMKNRADHRSSPNVANQPPSPGGKSAYASGTTAKITSVSTGNLCTEEQTPPPRPEAYPIPTQTYTREYFTFPASKSQDRMAPPQNQWPNYEEKPHMHTDSNHSSIAIQRVTRSQEELREDKAYQLERHRIEAAMDRKSDSDMWINQSSSLDSSTSSQEHLNHSSKSVTPASTLTKSGPGRWKTPAAIPATPVAVSQPIRTDLPPPPPPPPVHYAGDFDGMSMDLPLPPPPSANQIGLPSAQVAAAERRKREEHQRWYEKEKARLEEERERKRREQERKLGQMRTQSLNPAPFSPLTAQQMKPEKPSTLQRPQETVIRELQPQQQPRTIERRDLQYITVSKEELSSGDSLSPDPWKRDAKEKLEKQQQMHIVDMLSKEIQELQSKPDRSAEESDRLRKLMLEWQFQKRLQESKQKDEDDEEEEDDDVDTMLIMQRLEAERRARLQDEERRRQQQLEEMRKREAEDRARQEEERRRQEEERTKRDAEEKRRQEEGYYSRLEAERRRQHDEAARRLLEPEAPGLCRPPLPRDYEPPSPSPAPGAPPPPPQRNASYLKTQVLSPDSLFTAKFVAYNEEEEEEDCSLAGPNSYPGSTGAAVGAHDACRDAKEKRSKSQDADSPGSSGAPENLTFKERQRLFSQGQDVSNKVKASRKLTELENELNTK.

In terms of domain architecture, Ras-associating 1 spans 39–133 (FHGVMRFYFQ…GRFVLKNEND (95 aa)). Residues 128–194 (LKNENDAIPP…DRPFQGEDVE (67 aa)) are disordered. Positions 146 to 185 (EKQEKEGVIQNFKRTLSKKEKKEKKKREKEALRQASDKDD) form a coiled coil. The span at 160-172 (TLSKKEKKEKKKR) shows a compositional bias: basic residues. Over residues 173–189 (EKEALRQASDKDDRPFQ) the composition is skewed to basic and acidic residues. Residues Ser216, Ser246, and Ser256 each carry the phosphoserine modification. Residues 246-348 (SGGTLRIYAD…LVFQLKRRPP (103 aa)) form the Ras-associating 2 domain. Residues 349-371 (DHIPKKTKKHLEGKTPKGKERAD) are compositionally biased toward basic and acidic residues. The disordered stretch occupies residues 349-378 (DHIPKKTKKHLEGKTPKGKERADGSGYGST). Phosphoserine occurs at positions 391 and 424. The FHA domain maps to 426–492 (TEVGTEKLDD…LQSGMKVQFG (67 aa)). Residues Ser512, Ser557, Ser562, Ser589, and Ser655 each carry the phosphoserine modification. Residues 534 to 595 (FDLGGDIHSG…RQESRTQDAS (62 aa)) form a disordered region. The span at 580 to 591 (QQPDYRRQESRT) shows a compositional bias: basic and acidic residues. The Dilute domain occupies 668-908 (NKMVSMMEGV…IENVVTVAEN (241 aa)). Residues 1007-1093 (IITVTLKKQN…VVTLEVAKQG (87 aa)) enclose the PDZ domain. 9 positions are modified to phosphoserine: Ser1083, Ser1107, Ser1126, Ser1140, Ser1143, Ser1172, Ser1173, Ser1182, and Ser1199. A disordered region spans residues 1107-1223 (SPMMQRISDR…PRPEAYPIPT (117 aa)). Basic and acidic residues predominate over residues 1113–1128 (ISDRRGSGKPRPKSEG). The segment covering 1132–1143 (YNNSTQNGSPES) has biased composition (polar residues). Residues 1152–1172 (SEPKKLPGDDRLMKNRADHRS) are compositionally biased toward basic and acidic residues. Residues 1190 to 1210 (ASGTTAKITSVSTGNLCTEEQ) show a composition bias toward polar residues. Phosphothreonine is present on residues Thr1211 and Thr1232. 3 disordered regions span residues 1235–1473 (ASKS…LQRP), 1501–1528 (SKEE…EKQQ), and 1569–1824 (RLQE…LNTK). Ser1238 bears the Phosphoserine mark. 2 stretches are compositionally biased toward basic and acidic residues: residues 1252 to 1262 (YEEKPHMHTDS) and 1274 to 1302 (RSQE…KSDS). Position 1275 is a phosphoserine (Ser1275). The span at 1309–1318 (SSSLDSSTSS) shows a compositional bias: low complexity. Over residues 1325-1337 (SSKSVTPASTLTK) the composition is skewed to polar residues. Ser1328 carries the phosphoserine modification. A Phosphothreonine modification is found at Thr1330. Positions 1345 to 1356 (TPAAIPATPVAV) are enriched in low complexity. Positions 1364–1373 (LPPPPPPPPV) are enriched in pro residues. The segment covering 1407-1441 (AERRKREEHQRWYEKEKARLEEERERKRREQERKL) has biased composition (basic and acidic residues). A coiled-coil region spans residues 1408–1448 (ERRKREEHQRWYEKEKARLEEERERKRREQERKLGQMRTQS). Ser1501 and Ser1512 each carry phosphoserine. The span at 1515 to 1528 (PWKRDAKEKLEKQQ) shows a compositional bias: basic and acidic residues. Positions 1523-1667 (KLEKQQQMHI…SRLEAERRRQ (145 aa)) form a coiled coil. The segment covering 1578 to 1589 (EDDEEEEDDDVD) has biased composition (acidic residues). A compositionally biased stretch (basic and acidic residues) spans 1597–1677 (LEAERRARLQ…HDEAARRLLE (81 aa)). The segment covering 1694 to 1709 (PPSPSPAPGAPPPPPQ) has biased composition (pro residues). Ser1696, Ser1721, Ser1774, Ser1779, and Ser1799 each carry phosphoserine. Residues 1762 to 1776 (DACRDAKEKRSKSQD) show a composition bias toward basic and acidic residues. Lys1807 is subject to N6-acetyllysine. Over residues 1813–1824 (KLTELENELNTK) the composition is skewed to basic and acidic residues.

In terms of assembly, homodimer. Interacts with F-actin, nectin and NECTIN3. Essential for the association of nectin and E-cadherin. Isoform 1/s-afadin does not interact with F-actin. Interacts with ZO-1 and occludin, but probably in an indirect manner. Interacts with RIT1 and RIT2. Interacts with NRXN1 and BCR. Interacts with ADAM10; the interaction locks ADAM10 at adherens junctions following ADAM10 recruitment to adherens junctions by TSPAN33.

It localises to the cell junction. It is found in the adherens junction. Its function is as follows. Belongs to an adhesion system, probably together with the E-cadherin-catenin system, which plays a role in the organization of homotypic, interneuronal and heterotypic cell-cell adherens junctions (AJs). Nectin- and actin-filament-binding protein that connects nectin to the actin cytoskeleton. May play a key role in the organization of epithelial structures of the embryonic ectoderm. Essential for the organization of adherens junctions. The sequence is that of Afadin from Homo sapiens (Human).